Reading from the N-terminus, the 345-residue chain is MIRVAIAGATGYTGAELVKLITGHKEAKLAAVTSQSYSGRAIQEIFPAMRGVVDLVCEPLDINAISQRVDCVFLALPHKVSMGYAPQFIENKVKVVDLSADFRFQNASAYEAAYQEHSAKSLLNEAVYGLCELYRDKIAGSNLVGNPGCYPTSVLLPLVPLVRKGLVETCGIISDSKSGVSGAGRAPSLGSHFCEVNESFKPYKIGNHRHVPEMEEVISLEANEPVSITFVPHLLPLTRGMLSTIYARVTTGTTQSMIRTALMDQYDSDTFVRVLPQGEFPDIRHVRGTNFCDIGFHLDPGSGQLILVSAIDNLLKGAAGQAVQNMNILFGLEEQTGLELFPGAL.

The active site involves Cys149.

It belongs to the NAGSA dehydrogenase family. Type 1 subfamily.

Its subcellular location is the cytoplasm. It carries out the reaction N-acetyl-L-glutamate 5-semialdehyde + phosphate + NADP(+) = N-acetyl-L-glutamyl 5-phosphate + NADPH + H(+). Its pathway is amino-acid biosynthesis; L-arginine biosynthesis; N(2)-acetyl-L-ornithine from L-glutamate: step 3/4. Its function is as follows. Catalyzes the NADPH-dependent reduction of N-acetyl-5-glutamyl phosphate to yield N-acetyl-L-glutamate 5-semialdehyde. The sequence is that of N-acetyl-gamma-glutamyl-phosphate reductase from Desulforapulum autotrophicum (strain ATCC 43914 / DSM 3382 / VKM B-1955 / HRM2) (Desulfobacterium autotrophicum).